The chain runs to 488 residues: Serine/threonine-protein kinase 32C (488 aa).

A disordered region spans residues 1–56; the sequence is MRSGAERRGSSAAAPPSSPPPGRARPAGSDVSPALPPPAASQPRARDAGDARAQPR. Residues Ser10, Ser17, and Ser18 each carry the phosphoserine modification. A compositionally biased stretch (low complexity) spans 24–33; the sequence is ARPAGSDVSP. The region spanning 94–354 is the Protein kinase domain; the sequence is FQILRAIGKG…LQDMQTAPSL (261 aa). ATP contacts are provided by residues 100-108 and Lys123; that span reads IGKGSFGKV. Asp217 serves as the catalytic Proton acceptor. Residues 397-406 show a composition bias toward basic residues; sequence HKKKKRLAKN. 2 disordered regions span residues 397–420 and 443–488; these read HKKK…QSEN and KRSQ…SGSS.

Belongs to the protein kinase superfamily. Ser/Thr protein kinase family. It depends on Mg(2+) as a cofactor.

The catalysed reaction is L-seryl-[protein] + ATP = O-phospho-L-seryl-[protein] + ADP + H(+). The enzyme catalyses L-threonyl-[protein] + ATP = O-phospho-L-threonyl-[protein] + ADP + H(+). The sequence is that of Serine/threonine-protein kinase 32C from Mus musculus (Mouse).